We begin with the raw amino-acid sequence, 167 residues long: Xanthine-guanine phosphoribosyltransferase (167 aa).

Residues 47–48 (RG), Gln79, and 102–110 (DDLVDSGKT) contribute to the 5-phospho-alpha-D-ribose 1-diphosphate site. GMP is bound at residue Gln79. Asp103 is a Mg(2+) binding site. Guanine-binding residues include Asp106 and Ile149. Asp106 and Ile149 together coordinate xanthine. Residues 106–110 (DSGKT) and 148–149 (WI) each bind GMP.

It belongs to the purine/pyrimidine phosphoribosyltransferase family. XGPT subfamily. In terms of assembly, homotetramer. Requires Mg(2+) as cofactor.

It localises to the cell inner membrane. It carries out the reaction GMP + diphosphate = guanine + 5-phospho-alpha-D-ribose 1-diphosphate. The catalysed reaction is XMP + diphosphate = xanthine + 5-phospho-alpha-D-ribose 1-diphosphate. It catalyses the reaction IMP + diphosphate = hypoxanthine + 5-phospho-alpha-D-ribose 1-diphosphate. Its pathway is purine metabolism; GMP biosynthesis via salvage pathway; GMP from guanine: step 1/1. It participates in purine metabolism; XMP biosynthesis via salvage pathway; XMP from xanthine: step 1/1. Its function is as follows. Purine salvage pathway enzyme that catalyzes the transfer of the ribosyl-5-phosphate group from 5-phospho-alpha-D-ribose 1-diphosphate (PRPP) to the N9 position of the 6-oxopurines guanine and xanthine to form the corresponding ribonucleotides GMP (guanosine 5'-monophosphate) and XMP (xanthosine 5'-monophosphate), with the release of PPi. To a lesser extent, also acts on hypoxanthine. The sequence is that of Xanthine-guanine phosphoribosyltransferase from Cereibacter sphaeroides (strain ATCC 17025 / ATH 2.4.3) (Rhodobacter sphaeroides).